The chain runs to 129 residues: Small ribosomal subunit protein uS11 (129 aa).

Belongs to the universal ribosomal protein uS11 family. Part of the 30S ribosomal subunit. Interacts with proteins S7 and S18. Binds to IF-3.

Its function is as follows. Located on the platform of the 30S subunit, it bridges several disparate RNA helices of the 16S rRNA. Forms part of the Shine-Dalgarno cleft in the 70S ribosome. In Macrococcus caseolyticus (strain JCSC5402) (Macrococcoides caseolyticum), this protein is Small ribosomal subunit protein uS11.